Here is a 737-residue protein sequence, read N- to C-terminus: Angiotensin-converting enzyme-like protein Ace3 (737 aa).

A signal peptide spans 1–23 (MNLPWALLLVLLSHRQLLPWLRT). At 24-639 (VGETSLNDFY…TDTEPEQAYL (616 aa)) the chain is on the extracellular side. A Peptidase M2 domain is found at 32–611 (FYSEAQAKLF…VKQGDTLGWP (580 aa)). Cys-146 and Cys-152 are oxidised to a cystine. Residues Arg-180 and Tyr-218 each contribute to the chloride site. Cys-346 and Cys-364 are oxidised to a cystine. Zn(2+)-binding residues include His-377 and His-381. Asn-390 carries an N-linked (GlcNAc...) asparagine glycan. Residue Glu-405 participates in Zn(2+) binding. Chloride contacts are provided by Trp-479, Arg-483, and Arg-516. Cys-532 and Cys-544 are oxidised to a cystine. Residues 640–660 (GQWVLLSMSFFMLVLILALGF) form a helical membrane-spanning segment. Residues 661–700 (RLHYLEKQLLDEDTMILKTLPYSYFLGIAMEPHQAARKQW) are Cytoplasmic-facing. The chain crosses the membrane as a helical span at residues 701–721 (LLLGLCCILMLCCIGLLIRIV). Over 722-737 (TQNTENTPWMKNEGQS) the chain is Extracellular.

The protein belongs to the peptidase M2 family. In terms of assembly, interacts with IZUMO1. It depends on Zn(2+) as a cofactor. In terms of tissue distribution, expressed in sperm and testis (at protein level). Expressed in heart and testis. Not detected in kidney, lung, liver, brain, ovary, spleen and thymus.

The protein localises to the cytoplasmic vesicle. The protein resides in the secretory vesicle. Its subcellular location is the acrosome membrane. In Mus musculus (Mouse), this protein is Angiotensin-converting enzyme-like protein Ace3.